Reading from the N-terminus, the 450-residue chain is Trigger factor (450 aa).

A PPIase FKBP-type domain is found at 161–246; the sequence is GDRVVIDFKG…VKTVEAPEYP (86 aa). Residues 422–450 are disordered; sequence PMSLQELMSPQQPEAESAEGESKQDETKE. Residues 441 to 450 are compositionally biased toward basic and acidic residues; it reads GESKQDETKE.

This sequence belongs to the FKBP-type PPIase family. Tig subfamily.

Its subcellular location is the cytoplasm. It carries out the reaction [protein]-peptidylproline (omega=180) = [protein]-peptidylproline (omega=0). Its function is as follows. Involved in protein export. Acts as a chaperone by maintaining the newly synthesized protein in an open conformation. Functions as a peptidyl-prolyl cis-trans isomerase. This is Trigger factor from Alkalilimnicola ehrlichii (strain ATCC BAA-1101 / DSM 17681 / MLHE-1).